Reading from the N-terminus, the 319-residue chain is uncharacterized protein (319 aa).

The SIS domain occupies 36 to 178; the sequence is IIEFLLSFKG…MTVIHEERGF (143 aa). Position 51 to 56 (51 to 56) interacts with ATP; it reads GIGKSG. CBS domains are found at residues 203 to 263 and 268 to 319; these read MRSG…HLKT and MTKN…MGVS.

The protein belongs to the SIS family. GutQ/KpsF subfamily.

This is an uncharacterized protein from Rickettsia prowazekii (strain Madrid E).